The sequence spans 152 residues: Superoxide dismutase [Cu-Zn] 5 (152 aa).

Positions 44, 46, and 61 each coordinate Cu cation. Cysteines 55 and 144 form a disulfide. The Zn(2+) site is built by histidine 61, histidine 69, histidine 78, and aspartate 81. Histidine 118 serves as a coordination point for Cu cation.

The protein belongs to the Cu-Zn superoxide dismutase family. Cu cation serves as cofactor. It depends on Zn(2+) as a cofactor.

It carries out the reaction 2 superoxide + 2 H(+) = H2O2 + O2. Its function is as follows. Destroys radicals which are normally produced within the cells and which are toxic to biological systems. The protein is Superoxide dismutase [Cu-Zn] 5 (sodE) of Dictyostelium discoideum (Social amoeba).